Reading from the N-terminus, the 429-residue chain is Histidine--tRNA ligase (429 aa).

It belongs to the class-II aminoacyl-tRNA synthetase family. In terms of assembly, homodimer.

Its subcellular location is the cytoplasm. It carries out the reaction tRNA(His) + L-histidine + ATP = L-histidyl-tRNA(His) + AMP + diphosphate + H(+). This Streptococcus pneumoniae (strain CGSP14) protein is Histidine--tRNA ligase.